The following is a 497-amino-acid chain: Type II secretion system protein E (497 aa).

Residue 255–262 (GPTGSGKS) participates in ATP binding. 4 residues coordinate Zn(2+): Cys388, Cys391, Cys419, and Cys422.

Belongs to the GSP E family. In terms of assembly, forms homooligomers; most probably hexamers. Interacts with PulL/GspL. It depends on Zn(2+) as a cofactor.

Its subcellular location is the cell inner membrane. It carries out the reaction ATP + H2O + cellular proteinSide 1 = ADP + phosphate + cellular proteinSide 2.. Functionally, ATPase component of the type II secretion system required for the energy-dependent secretion of extracellular factors such as proteases and toxins from the periplasm. Acts as a molecular motor to provide the energy that is required for assembly of the pseudopilus and the extrusion of substrates generated in the cytoplasm. The chain is Type II secretion system protein E (pulE) from Klebsiella pneumoniae.